The following is an 85-amino-acid chain: Small ribosomal subunit protein uS17 (85 aa).

This sequence belongs to the universal ribosomal protein uS17 family. As to quaternary structure, part of the 30S ribosomal subunit.

Functionally, one of the primary rRNA binding proteins, it binds specifically to the 5'-end of 16S ribosomal RNA. This Mycoplasma capricolum subsp. capricolum (strain California kid / ATCC 27343 / NCTC 10154) protein is Small ribosomal subunit protein uS17.